The following is a 353-amino-acid chain: Putative transport protein YrrI (353 aa).

The next 8 helical transmembrane spans lie at 8 to 28 (LLLW…FFML), 37 to 57 (LVIK…YLLL), 77 to 97 (IYVL…PVLI), 165 to 185 (FLIA…IELM), 220 to 240 (LLVC…FGLP), 243 to 263 (LILG…PFIG), 269 to 289 (LIAM…VFIL), and 311 to 331 (VVIM…GMIL).

This sequence belongs to the autoinducer-2 exporter (AI-2E) (TC 2.A.86) family.

Its subcellular location is the cell membrane. The sequence is that of Putative transport protein YrrI (yrrI) from Bacillus subtilis (strain 168).